We begin with the raw amino-acid sequence, 905 residues long: MPLRLDIKRKLTARSDRVKSVDLHPTEPWMLASLYNGSVCVWNHETQTLVKTFEVCDLPVRAAKFVARKNWVVTGADDMQIRVFNYNTLERVHMFEAHSDYIRCIAVHPTQPFILTSSDDMLIKLWDWDKKWSCSQVFEGHTHYVMQIVINPKDNNQFASASLDRTIKVWQLGSSSPNFTLEGHEKGVNCIDYYSGGDKPYLISGADDRLVKIWDYQNKTCVQTLEGHAQNVSCASFHPELPIIITGSEDGTVRIWHSSTYRLESTLNYGMERVWCVASLRGSNNVALGYDEGSIIVKLGREEPAMSMDANGKIIWAKHSEVQQANLKAMGDTEIKDGERLPLAVKDMGSCEIYPQTIQHNPNGRFVVVCGDGEYIIYTAMALRNKSFGSAQEFAWAHDSSEYAIRESNSIVKIFKNFKEKKSFKPDFGAESIYGGFLLGVRSVNGLAFYDWENTELIRRIEIQPKHIFWSDSGELVCIATEESFFILKYLSEKVLAAQETHEGVTEDGIEDAFEVLGEIQEIVKTGLWVGDCFIYTSSVNRLNYYVGGEIVTIAHLDRTMYLLGYIPKDNRLYLGDKELNIVSYSLLVSVLEYQTAVMRRDFSMADKVLPTIPKEQRTRVAHFLEKQGFKQQALTVSTDPEHRFELALQLGELKIAYQLAVEAESEQKWKQLAELAISKCQFSLAQECLHHAQDYGGLLLLATASGNASMVNKLAEGAERDGKNNVAFMSYFLQGKLDACLELLIRTGRLPEAAFLARTYLPSQVSRVVKLWRENLSKVNQKAAESLADPTEYENLFPGLKEAFVVEEWVKETHADLWPAKQYPLVTPNEERNVMEEAKGFQPSRPTAQQEPDGKPASSPVIMASQTTHKEEKSLLELEVDLDNLELEDIDTTDINLDEDILDD.

WD repeat units lie at residues 13–52, 55–94, 97–136, 140–180, 183–224, 227–266, 350–388, and 390–425; these read ARSD…LVKT, VCDL…RVHM, AHSD…SCSQ, GHTH…PNFT, GHEK…CVQT, GHAQ…LEST, SCEI…NKSF, and SAQE…KSFK. Residue Lys-627 is modified to N6-acetyllysine. Residues 746–783 form a WD 9 repeat; it reads IRTGRLPEAAFLARTYLPSQVSRVVKLWRENLSKVNQK. Positions 837–873 are disordered; the sequence is EEAKGFQPSRPTAQQEPDGKPASSPVIMASQTTHKEE. Ser-859 carries the post-translational modification Phosphoserine. A coiled-coil region spans residues 867-891; that stretch reads QTTHKEEKSLLELEVDLDNLELEDI.

The protein belongs to the WD repeat COPB2 family. In terms of assembly, oligomeric complex that consists of at least the alpha, beta, beta', gamma, delta, epsilon and zeta subunits. Probably interacts with PEX11A. Interacts with SCYL1. Interacts with JAGN1.

The protein localises to the cytoplasm. It localises to the cytosol. Its subcellular location is the golgi apparatus membrane. The protein resides in the cytoplasmic vesicle. It is found in the COPI-coated vesicle membrane. In terms of biological role, the coatomer is a cytosolic protein complex that binds to dilysine motifs and reversibly associates with Golgi non-clathrin-coated vesicles, which further mediate biosynthetic protein transport from the ER, via the Golgi up to the trans Golgi network. Coatomer complex is required for budding from Golgi membranes, and is essential for the retrograde Golgi-to-ER transport of dilysine-tagged proteins. In mammals, the coatomer can only be recruited by membranes associated to ADP-ribosylation factors (ARFs), which are small GTP-binding proteins; the complex also influences the Golgi structural integrity, as well as the processing, activity, and endocytic recycling of LDL receptors. This coatomer complex protein, essential for Golgi budding and vesicular trafficking, is a selective binding protein (RACK) for protein kinase C, epsilon type. It binds to Golgi membranes in a GTP-dependent manner. The chain is Coatomer subunit beta' (Copb2) from Mus musculus (Mouse).